Here is a 245-residue protein sequence, read N- to C-terminus: Purine nucleoside phosphorylase (245 aa).

An a purine D-ribonucleoside-binding site is contributed by His-8. Residues 24–28 (GDPGR), Arg-46, and 89–92 (RAGS) contribute to the phosphate site. 184–185 (ME) is a binding site for a purine D-ribonucleoside. The Proton donor role is filled by Asp-207.

This sequence belongs to the PNP/MTAP phosphorylase family. In terms of assembly, homohexamer; trimer of homodimers.

The catalysed reaction is inosine + phosphate = alpha-D-ribose 1-phosphate + hypoxanthine. It carries out the reaction guanosine + phosphate = alpha-D-ribose 1-phosphate + guanine. It catalyses the reaction 2'-deoxyguanosine + phosphate = 2-deoxy-alpha-D-ribose 1-phosphate + guanine. The enzyme catalyses 2'-deoxyinosine + phosphate = 2-deoxy-alpha-D-ribose 1-phosphate + hypoxanthine. The protein operates within purine metabolism; purine nucleoside salvage. Functionally, as part of the purine salvage pathway, catalyzes the phosphorolytic breakdown of the N-glycosidic bond in the beta-(deoxy)ribonucleoside molecules, with the formation of the corresponding free purine bases and pentose-1-phosphate. Preferentially acts on inosine and guanosine, and to a lesser extent on 2'-deoxyinosine and 2'-deoxyguanosine. This is Purine nucleoside phosphorylase from Plasmodium vivax (strain Salvador I).